A 330-amino-acid chain; its full sequence is DNA-directed RNA polymerase subunit alpha (330 aa).

Positions 1-229 are alpha N-terminal domain (alpha-NTD); it reads MKNIKFIKPF…DHFNVLVELS (229 aa). The segment at 245 to 330 is alpha C-terminal domain (alpha-CTD); that stretch reads AHNSVLDLEI…HSVEEDKDKH (86 aa).

This sequence belongs to the RNA polymerase alpha chain family. Homodimer. The RNAP catalytic core consists of 2 alpha, 1 beta, 1 beta' and 1 omega subunit. When a sigma factor is associated with the core the holoenzyme is formed, which can initiate transcription.

The catalysed reaction is RNA(n) + a ribonucleoside 5'-triphosphate = RNA(n+1) + diphosphate. In terms of biological role, DNA-dependent RNA polymerase catalyzes the transcription of DNA into RNA using the four ribonucleoside triphosphates as substrates. This chain is DNA-directed RNA polymerase subunit alpha, found in Onion yellows phytoplasma (strain OY-M).